Consider the following 320-residue polypeptide: Serpentine receptor class gamma-17 (320 aa).

Transmembrane regions (helical) follow at residues 25–45, 80–100, 155–175, 192–212, 237–257, and 268–288; these read AIYFVTACYLSVGLFCHISLL, IFFGRIFMYIPQLCPFVSTFF, FIMLILPFAGLWNIMISQVIA, WASLSLFQSICILTALGFTIV, FTSISISCTFLLVAGTQLTFA, and YILQFLAFDTFNVGSAIIMFL.

This sequence belongs to the nematode receptor-like protein srg family.

It localises to the membrane. The polypeptide is Serpentine receptor class gamma-17 (srg-17) (Caenorhabditis elegans).